A 77-amino-acid polypeptide reads, in one-letter code: Translational regulator CsrA (77 aa).

The protein belongs to the CsrA/RsmA family. As to quaternary structure, homodimer; the beta-strands of each monomer intercalate to form a hydrophobic core, while the alpha-helices form wings that extend away from the core.

Its subcellular location is the cytoplasm. Its function is as follows. A translational regulator that binds mRNA to regulate translation initiation and/or mRNA stability. Usually binds in the 5'-UTR at or near the Shine-Dalgarno sequence preventing ribosome-binding, thus repressing translation. Its main target seems to be the major flagellin gene, while its function is anatagonized by FliW. This Pseudarthrobacter chlorophenolicus (strain ATCC 700700 / DSM 12829 / CIP 107037 / JCM 12360 / KCTC 9906 / NCIMB 13794 / A6) (Arthrobacter chlorophenolicus) protein is Translational regulator CsrA.